The primary structure comprises 488 residues: UDP-N-acetylmuramoyl-L-alanyl-D-glutamate--2,6-diaminopimelate ligase (488 aa).

UDP-N-acetyl-alpha-D-muramoyl-L-alanyl-D-glutamate-binding positions include L24, S26, and 41 to 43; that span reads HQV. ATP is bound at residue 113–119; the sequence is GTNGKTT. Residues N154, 155 to 156, S182, Q188, and R190 contribute to the UDP-N-acetyl-alpha-D-muramoyl-L-alanyl-D-glutamate site; that span reads TT. Position 222 is an N6-carboxylysine (K222). Meso-2,6-diaminopimelate contacts are provided by residues R386, 410–413, G461, and E465; that span reads DNPR. The Meso-diaminopimelate recognition motif motif lies at 410 to 413; it reads DNPR.

It belongs to the MurCDEF family. MurE subfamily. The cofactor is Mg(2+). In terms of processing, carboxylation is probably crucial for Mg(2+) binding and, consequently, for the gamma-phosphate positioning of ATP.

The protein resides in the cytoplasm. It catalyses the reaction UDP-N-acetyl-alpha-D-muramoyl-L-alanyl-D-glutamate + meso-2,6-diaminopimelate + ATP = UDP-N-acetyl-alpha-D-muramoyl-L-alanyl-gamma-D-glutamyl-meso-2,6-diaminopimelate + ADP + phosphate + H(+). It participates in cell wall biogenesis; peptidoglycan biosynthesis. Functionally, catalyzes the addition of meso-diaminopimelic acid to the nucleotide precursor UDP-N-acetylmuramoyl-L-alanyl-D-glutamate (UMAG) in the biosynthesis of bacterial cell-wall peptidoglycan. The sequence is that of UDP-N-acetylmuramoyl-L-alanyl-D-glutamate--2,6-diaminopimelate ligase from Haemophilus influenzae (strain ATCC 51907 / DSM 11121 / KW20 / Rd).